Reading from the N-terminus, the 436-residue chain is Adenosylmethionine-8-amino-7-oxononanoate aminotransferase (436 aa).

Trp56 contacts substrate. A pyridoxal 5'-phosphate-binding site is contributed by 114-115; that stretch reads GS. Position 148 (Tyr148) interacts with substrate. Asp245 contributes to the pyridoxal 5'-phosphate binding site. Substrate contacts are provided by Lys274, Ser309, and Arg400. Residue Lys274 is modified to N6-(pyridoxal phosphate)lysine.

The protein belongs to the class-III pyridoxal-phosphate-dependent aminotransferase family. BioA subfamily. Homodimer. Requires pyridoxal 5'-phosphate as cofactor.

The protein resides in the cytoplasm. The enzyme catalyses (8S)-8-amino-7-oxononanoate + S-adenosyl-L-methionine = S-adenosyl-4-methylsulfanyl-2-oxobutanoate + (7R,8S)-7,8-diammoniononanoate. It participates in cofactor biosynthesis; biotin biosynthesis; 7,8-diaminononanoate from 8-amino-7-oxononanoate (SAM route): step 1/1. Catalyzes the transfer of the alpha-amino group from S-adenosyl-L-methionine (SAM) to 7-keto-8-aminopelargonic acid (KAPA) to form 7,8-diaminopelargonic acid (DAPA). It is the only aminotransferase known to utilize SAM as an amino donor. The protein is Adenosylmethionine-8-amino-7-oxononanoate aminotransferase of Helicobacter pylori (strain ATCC 700392 / 26695) (Campylobacter pylori).